A 1254-amino-acid chain; its full sequence is Histone-lysine N-methyltransferase eggless (1254 aa).

Disordered regions lie at residues 24–209 and 228–248; these read ALVE…EIPR and PVPR…SKTT. 2 stretches are compositionally biased toward basic and acidic residues: residues 40–57 and 65–81; these read TPEK…KDLT and KSQE…KDPE. Over residues 112-125 the composition is skewed to low complexity; that stretch reads SVELLESPLKSPSS. Basic and acidic residues predominate over residues 136-162; that stretch reads LEEKEKPGPAKELEPKESEPDSKESSK. The span at 172 to 181 shows a compositional bias: polar residues; the sequence is ELISSPTSDD. Composition is skewed to basic and acidic residues over residues 182–197 and 234–243; these read SLAK…EHGQ and AMQESKETQK. Positions 391–416 form a coiled coil; sequence TILQAKIERLAKKFEEVDLQLAQVQG. Tudor domains lie at 535–607 and 634–691; these read RLPI…SEKV and QCTK…KETQ. The interval 734–760 is disordered; it reads ARKSTSKSGSPASTAAPPTGSSSSSAV. Residues 739–759 show a composition bias toward low complexity; that stretch reads SKSGSPASTAAPPTGSSSSSA. Residues 811 to 877 enclose the MBD domain; that stretch reads LDSYSPLSKP…DNFDFTPDLR (67 aa). Positions 939–1011 constitute a Pre-SET domain; the sequence is VCCDCEDDCS…NCLNRVVQHS (73 aa). The Zn(2+) site is built by Cys941, Cys943, Cys947, Cys953, Cys955, Cys993, Cys997, Cys999, and Cys1003. Residues 1014-1229 enclose the SET domain; that stretch reads MKLQVFKTSN…SGTELTWNYN (216 aa). S-adenosyl-L-methionine is bound by residues 1024 to 1026, Asp1062, and Tyr1064; that span reads RGW. Residues 1081 to 1090 show a composition bias toward basic and acidic residues; that stretch reads YESDVERADL. The segment at 1081–1139 is disordered; sequence YESDVERADLDHEDDNYGPDAEDDDDFRPNNYYQKKKEKLRSSRSNSSSTQNTELDSQE. Positions 1091 to 1106 are enriched in acidic residues; it reads DHEDDNYGPDAEDDDD. The segment covering 1123–1134 has biased composition (low complexity); sequence SRSNSSSTQNTE. S-adenosyl-L-methionine contacts are provided by residues Arg1183 and 1186 to 1187; that span reads NH. 4 residues coordinate Zn(2+): Cys1189, Cys1242, Cys1244, and Cys1249. The region spanning 1238–1254 is the Post-SET domain; sequence KVLYCQCGAQNCRVRLL.

This sequence belongs to the class V-like SAM-binding methyltransferase superfamily. Histone-lysine methyltransferase family. Suvar3-9 subfamily.

It localises to the nucleus. The protein resides in the chromosome. It carries out the reaction L-lysyl(9)-[histone H3] + 3 S-adenosyl-L-methionine = N(6),N(6),N(6)-trimethyl-L-lysyl(9)-[histone H3] + 3 S-adenosyl-L-homocysteine + 3 H(+). In terms of biological role, histone methyltransferase that specifically trimethylates 'Lys-9' of histone H3 in ovary. H3 'Lys-9' trimethylation represents a specific tag for epigenetic transcriptional repression by recruiting Su(var)205/HP1 to methylated histones. Plays a central role during oogenesis. In Drosophila pseudoobscura pseudoobscura (Fruit fly), this protein is Histone-lysine N-methyltransferase eggless (egg).